Consider the following 829-residue polypeptide: Leucine--tRNA ligase (829 aa).

Positions 42-52 (PYPSGRIHMGH) match the 'HIGH' region motif. The 'KMSKS' region signature appears at 584–588 (KMSKS). Lys587 contributes to the ATP binding site.

This sequence belongs to the class-I aminoacyl-tRNA synthetase family.

It is found in the cytoplasm. It catalyses the reaction tRNA(Leu) + L-leucine + ATP = L-leucyl-tRNA(Leu) + AMP + diphosphate. This is Leucine--tRNA ligase from Syntrophobacter fumaroxidans (strain DSM 10017 / MPOB).